A 146-amino-acid polypeptide reads, in one-letter code: Extracellular globin-2A (146 aa).

In terms of domain architecture, Globin spans 4 to 146; sequence HCGPLQRLKV…EVIYPGIKHD (143 aa). Residues cysteine 5 and cysteine 134 are joined by a disulfide bond. Histidine 97 lines the heme b pocket.

The protein belongs to the globin family. Disulfide bonded trimer of chains IIA, IIB, and IIC.

The sequence is that of Extracellular globin-2A from Tylorrhynchus heterochetus (Japanese palolo worm).